The sequence spans 129 residues: MSRIYATGKRKTAVAKVWLTKGSGKITVNGMSLDEWLGGHEALKLRVRLPLALTKMSESVDVVATTLGGGYSAQADALKHGISKALCAMDDNLRSVLKPHGLLTRDARVVERKKYGKHKARRSPQFSKR.

This sequence belongs to the universal ribosomal protein uS9 family.

In Nitratiruptor sp. (strain SB155-2), this protein is Small ribosomal subunit protein uS9.